The sequence spans 512 residues: Serine--tRNA ligase, cytoplasmic (512 aa).

Met-1 carries the post-translational modification N-acetylmethionine. The interval 9 to 61 (RVDKGGDPALIRETQEKRFKDPGLVDQLVKADSEWRRCRFRADNLNKLKNLCS) is interaction with tRNA. Ser-241 is modified (phosphoserine). The L-serine site is built by Thr-271 and Arg-302. Residues 302–304 (RQE) and 318–321 (VHQF) each bind ATP. An N6-acetyllysine modification is found at Lys-323. Residue Glu-325 participates in L-serine binding. 391 to 394 (ELVS) contacts ATP. Asn-427 and Thr-429 together coordinate L-serine. Residues 472-512 (KPAPIDQEPSKKQKKQHEGSKKKAKEVTLESQLQNMEVTEA) form a disordered region. Positions 479–499 (EPSKKQKKQHEGSKKKAKEVT) are enriched in basic and acidic residues. The Nuclear localization signal signature appears at 482 to 494 (KKQKKQHEGSKKK). Positions 500–512 (LESQLQNMEVTEA) are enriched in polar residues.

It belongs to the class-II aminoacyl-tRNA synthetase family. Type-1 seryl-tRNA synthetase subfamily. In terms of assembly, homodimer. The tRNA molecule may bind across the dimer. Interacts with SIRT2. Interacts with METTL6; interaction is required for the tRNA N(3)-methylcytidine methyltransferase activity of METTL6.

It localises to the cytoplasm. The protein resides in the nucleus. It catalyses the reaction tRNA(Ser) + L-serine + ATP = L-seryl-tRNA(Ser) + AMP + diphosphate + H(+). The catalysed reaction is tRNA(Sec) + L-serine + ATP = L-seryl-tRNA(Sec) + AMP + diphosphate + H(+). It participates in aminoacyl-tRNA biosynthesis; selenocysteinyl-tRNA(Sec) biosynthesis; L-seryl-tRNA(Sec) from L-serine and tRNA(Sec): step 1/1. Functionally, catalyzes the attachment of serine to tRNA(Ser) in a two-step reaction: serine is first activated by ATP to form Ser-AMP and then transferred to the acceptor end of tRNA(Ser). Is probably also able to aminoacylate tRNA(Sec) with serine, to form the misacylated tRNA L-seryl-tRNA(Sec), which will be further converted into selenocysteinyl-tRNA(Sec). In the nucleus, binds to the VEGFA core promoter and prevents MYC binding and transcriptional activation by MYC. Recruits SIRT2 to the VEGFA promoter, promoting deacetylation of histone H4 at 'Lys-16' (H4K16). Thereby, inhibits the production of VEGFA and sprouting angiogenesis mediated by VEGFA. The sequence is that of Serine--tRNA ligase, cytoplasmic (SARS1) from Cricetulus griseus (Chinese hamster).